The following is a 156-amino-acid chain: Small ribosomal subunit protein uS7 (156 aa).

Belongs to the universal ribosomal protein uS7 family. As to quaternary structure, part of the 30S ribosomal subunit. Contacts proteins S9 and S11.

In terms of biological role, one of the primary rRNA binding proteins, it binds directly to 16S rRNA where it nucleates assembly of the head domain of the 30S subunit. Is located at the subunit interface close to the decoding center, probably blocks exit of the E-site tRNA. This Clavibacter sepedonicus (Clavibacter michiganensis subsp. sepedonicus) protein is Small ribosomal subunit protein uS7.